Consider the following 925-residue polypeptide: Probable replication restart protein PriA (925 aa).

Cysteine 645, cysteine 648, cysteine 654, cysteine 657, cysteine 672, cysteine 675, cysteine 685, and cysteine 688 together coordinate Zn(2+).

Belongs to the helicase family. PriA subfamily. In terms of assembly, interacts with DnaB (DR_0549). Component of the replication restart primosome. It depends on Zn(2+) as a cofactor.

Initiates the restart of stalled replication forks, which reloads the replicative helicase on sites other than the origin of replication. Recognizes abandoned replication forks and remodels them to uncover a helicase loading site. Promotes assembly of the primosome at these replication forks. Recognizes and binds DNA at stalled replication forks, also binds single-stranded (ss)DNA. This Deinococcus radiodurans (strain ATCC 13939 / DSM 20539 / JCM 16871 / CCUG 27074 / LMG 4051 / NBRC 15346 / NCIMB 9279 / VKM B-1422 / R1) protein is Probable replication restart protein PriA.